The primary structure comprises 428 residues: Sporulation kinase C (428 aa).

2 consecutive transmembrane segments (helical) span residues 8–28 (IISIILAMIFIMFWDYLFYFI) and 36–56 (PVDIVYTAVTLVSVWMLAYYI). The 72-residue stretch at 76 to 147 (LSEEKNRIMD…NTQIQNKASS (72 aa)) folds into the PAS domain. The region spanning 148 to 200 (GMFTAKYVTKNGTIFWGEVHYKLYYDRDDQFTGSLGTMSDITERKEAEDELIE) is the PAC domain. In terms of domain architecture, Histidine kinase spans 221–426 (GIAHEVRNPL…VFQVVLPLKS (206 aa)). Histidine 224 carries the phosphohistidine; by autocatalysis modification.

As to quaternary structure, oligomerizes, probably forms homodimers; oligomerization is assisted by FloT. Interacts with FloT. Another study shows only rare colocalization with FloT or FloA membrane assemblies. KinC membrane assemblies are more mobile than FloT membrane assemblies.

It localises to the cell membrane. The protein localises to the membrane raft. It carries out the reaction ATP + protein L-histidine = ADP + protein N-phospho-L-histidine.. Functionally, phosphorylates the sporulation-regulatory protein Spo0A a transcription factor that also controls biofilm formation. Requires FloT and FloA for localization to DRMs and for activity. This Bacillus subtilis (strain 168) protein is Sporulation kinase C.